Reading from the N-terminus, the 196-residue chain is DnaA initiator-associating protein DiaA (196 aa).

The 163-residue stretch at 34–196 (LVQSLLNGNK…DNTLFPHQND (163 aa)) folds into the SIS domain.

The protein belongs to the SIS family. DiaA subfamily. In terms of assembly, homotetramer; dimer of dimers.

Its function is as follows. Required for the timely initiation of chromosomal replication via direct interactions with the DnaA initiator protein. This Yersinia pestis bv. Antiqua (strain Antiqua) protein is DnaA initiator-associating protein DiaA.